The following is a 363-amino-acid chain: Probable auxin efflux carrier component 5a (363 aa).

Transmembrane regions (helical) follow at residues 7 to 27, 39 to 59, 72 to 92, 103 to 123, 134 to 154, 222 to 242, 246 to 266, 281 to 301, 307 to 327, and 342 to 362; these read VYKVVAATVPLYFALFLGYGS, CDAVNRLVAFFALPFFTFEFT, VAADVISKAVIVAVIGAWARF, SITSFSLSTLTNSLVVGVPMA, LVVQLSVFQAIVWLTLLLFVL, FVGITWACLANRLHIALPSAF, VLIMSKSGTGMAMFSMGLFMA, LGLVLKFALGPAAMAIGSIAV, VLRVAIIQAALPQSITSFIFA, and IFGMLVSLPLLVGFYIVLELI.

Belongs to the auxin efflux carrier (TC 2.A.69.1) family. As to expression, expressed in leaves, shoot apex and panicles. Expressed in roots, stem bases, stems, leaves and young panicles.

The protein localises to the membrane. May act as a component of the auxin efflux carrier. This is Probable auxin efflux carrier component 5a from Oryza sativa subsp. japonica (Rice).